Here is a 373-residue protein sequence, read N- to C-terminus: tRNA (guanine(26)-N(2))-dimethyltransferase (373 aa).

One can recognise a Trm1 methyltransferase domain in the interval 2 to 365 (KIISEGETKL…AELSDLVVLI (364 aa)). S-adenosyl-L-methionine contacts are provided by Arg-35, Arg-66, Asp-86, Asp-113, and Ala-114.

The protein belongs to the class I-like SAM-binding methyltransferase superfamily. Trm1 family.

The enzyme catalyses guanosine(26) in tRNA + 2 S-adenosyl-L-methionine = N(2)-dimethylguanosine(26) in tRNA + 2 S-adenosyl-L-homocysteine + 2 H(+). Dimethylates a single guanine residue at position 26 of a number of tRNAs using S-adenosyl-L-methionine as donor of the methyl groups. The sequence is that of tRNA (guanine(26)-N(2))-dimethyltransferase from Methanococcus maripaludis (Methanococcus deltae).